Consider the following 672-residue polypeptide: Zinc finger and BTB domain-containing protein 24 (672 aa).

A BTB domain is found at 39-105 (CDITLIVEDV…MYSAVVLVDE (67 aa)). Positions 136 to 208 (HMQVKRKRGR…GKRKIKQPIR (73 aa)) are disordered. Positions 140–152 (KRKRGRPKKNQDL) form a DNA-binding region, a.T hook 1. The segment covering 148-158 (KNQDLSQKENP) has biased composition (basic and acidic residues). Over residues 160 to 171 (SELQAQTSSEIQ) the composition is skewed to polar residues. Over residues 198–208 (EGKRKIKQPIR) the composition is skewed to basic residues. A DNA-binding region (a.T hook 2) is located at residues 223–235 (PGKRGRRRKYPDT). 8 consecutive C2H2-type zinc fingers follow at residues 237–259 (ARCEECGKVFKSHLFLKIHQRTH), 265–287 (FRCSVCGKEFTQKHTLLVHQRMH), 293–315 (YICTVCSKALSTKHSLLEHMNLH), 321–343 (FTCEECGKSFSQQRQLKSHNRVH), 349–371 (PECAECHHKFMDAAQLKKHLRTH), 377–399 (FTCEICGKCFTAKSTLQTHIRIH), 405–427 (YVCKVCDKTFSDPSARRRHEVSH), and 433–455 (FSCSICKVSFARKDNLKAHIKTH). Positions 453-492 (KTHNKENPPAQAESTDKPPQSAPEQQEQEQQQQQQTSGDK) are disordered. Residues 476–487 (EQQEQEQQQQQQ) show a composition bias toward low complexity.

It belongs to the krueppel C2H2-type zinc-finger protein family.

It is found in the nucleus. May be involved in BMP2-induced transcription. The polypeptide is Zinc finger and BTB domain-containing protein 24 (zbtb24) (Danio rerio (Zebrafish)).